We begin with the raw amino-acid sequence, 488 residues long: Zinc metalloproteinase-disintegrin 8 (488 aa).

The N-terminal stretch at 1 to 20 (MIQVLLVTICLAVFPYQGSS) is a signal peptide. Positions 21-191 (IILESGNVND…KASQLNLPPE (171 aa)) are excised as a propeptide. The region spanning 198–396 (TYIELVVVAD…STTRCLHNEP (199 aa)) is the Peptidase M12B domain. Ca(2+) contacts are provided by glutamate 201 and aspartate 285. Asparagine 296 carries an N-linked (GlcNAc...) asparagine glycan. Intrachain disulfides connect cysteine 309–cysteine 391, cysteine 349–cysteine 373, and cysteine 351–cysteine 356. A Zn(2+)-binding site is contributed by histidine 334. Glutamate 335 is a catalytic residue. Zn(2+) is bound by residues histidine 338 and histidine 344. Ca(2+)-binding residues include cysteine 391, asparagine 394, asparagine 409, glutamate 413, glutamate 416, and aspartate 419. Residues 404-488 (PPFCGNYFKE…ADCPRNGLYG (85 aa)) form the Disintegrin domain. 7 disulfides stabilise this stretch: cysteine 407–cysteine 426, cysteine 418–cysteine 436, cysteine 420–cysteine 431, cysteine 430–cysteine 453, cysteine 444–cysteine 450, cysteine 449–cysteine 474, and cysteine 462–cysteine 481. A Cell attachment site motif is present at residues 466–468 (RGD).

This sequence belongs to the venom metalloproteinase (M12B) family. P-II subfamily. Requires Zn(2+) as cofactor. Expressed by the venom gland.

The protein localises to the secreted. Inhibits ADP-induced platelet aggregation (probably by binding integrin alpha-IIb/beta-3 (ITGA2B/ITGB3)) and degrades fibrinogen. This Crotalus adamanteus (Eastern diamondback rattlesnake) protein is Zinc metalloproteinase-disintegrin 8.